We begin with the raw amino-acid sequence, 610 residues long: Putative protein tag-250 (610 aa).

2 consecutive Tudor domains span residues 149 to 260 (VALK…LLPP) and 386 to 506 (MPMS…KIGG).

This Caenorhabditis elegans protein is Putative protein tag-250 (tag-250).